Consider the following 416-residue polypeptide: Pectin acetylesterase 10 (416 aa).

Positions Met1–Ala20 are cleaved as a signal peptide. Asn27 is a glycosylation site (N-linked (GlcNAc...) asparagine). Catalysis depends on charge relay system residues Ser198, Asp294, and His361.

This sequence belongs to the pectinacetylesterase family.

Its subcellular location is the secreted. The protein localises to the cell wall. Its function is as follows. Hydrolyzes acetyl esters in homogalacturonan regions of pectin. In type I primary cell wall, galacturonic acid residues of pectin can be acetylated at the O-2 and O-3 positions. Decreasing the degree of acetylation of pectin gels in vitro alters their physical properties. In Arabidopsis thaliana (Mouse-ear cress), this protein is Pectin acetylesterase 10.